Here is a 184-residue protein sequence, read N- to C-terminus: GTP cyclohydrolase 1 (184 aa).

Residues Cys-75, His-78, and Cys-146 each coordinate Zn(2+).

This sequence belongs to the GTP cyclohydrolase I family. In terms of assembly, toroid-shaped homodecamer, composed of two pentamers of five dimers.

The enzyme catalyses GTP + H2O = 7,8-dihydroneopterin 3'-triphosphate + formate + H(+). It functions in the pathway cofactor biosynthesis; 7,8-dihydroneopterin triphosphate biosynthesis; 7,8-dihydroneopterin triphosphate from GTP: step 1/1. This is GTP cyclohydrolase 1 from Pseudoalteromonas atlantica (strain T6c / ATCC BAA-1087).